The following is a 1265-amino-acid chain: Cohesin subunit SA-1 (1265 aa).

Residues 1–16 are compositionally biased toward polar residues; sequence MITSELSVLQDSTNES. 2 disordered regions span residues 1–21 and 37–91; these read MITS…VMHT and DLEV…EGDP. Residues 62–73 are compositionally biased toward basic and acidic residues; sequence TPGDRSRAEPGS. The SCD domain occupies 303 to 388; that stretch reads FVHRYRDAIA…NRFKDRIVSM (86 aa). 2 disordered regions span residues 1063 to 1097 and 1111 to 1130; these read GDED…KRVI and DTIQ…TVLR. The segment covering 1069–1082 has biased composition (low complexity); it reads SVNSGGSNSKGSSV. Residues 1083 to 1095 are compositionally biased toward basic residues; it reads RSKKGRPPLHKKR. Residues 1111-1129 show a composition bias toward polar residues; that stretch reads DTIQTPGALTTPQLTSTVL.

This sequence belongs to the SCC3 family. As to quaternary structure, interacts directly with RAD21 in cohesin complex. Cohesin complexes are composed of a heterodimer between and SMC3, which are attached via their hinge domain, and RAD21 which link them at their heads, and one STAG protein (STAG1 OR STAG2). In cohesin complexes, STAG1 is mutually exclusive with STAG2. In terms of processing, phosphorylated by PLK1. The large dissociation of cohesin from chromosome arms during prophase is partly due to its phosphorylation.

Its subcellular location is the nucleus. It localises to the chromosome. The protein localises to the centromere. Functionally, component of cohesin complex, a complex required for the cohesion of sister chromatids after DNA replication. The cohesin complex apparently forms a large proteinaceous ring within which sister chromatids can be trapped. At anaphase, the complex is cleaved and dissociates from chromatin, allowing sister chromatids to segregate. The cohesin complex may also play a role in spindle pole assembly during mitosis. The polypeptide is Cohesin subunit SA-1 (stag1) (Xenopus laevis (African clawed frog)).